We begin with the raw amino-acid sequence, 913 residues long: DNA polymerase (913 aa).

The tract at residues 182-401 is contains conserved residues essential for 3' -&gt; 5' exonuclease activities; the sequence is PLIIASWDIE…AYARKDTDLP (220 aa).

The protein belongs to the DNA polymerase type-B family.

The catalysed reaction is DNA(n) + a 2'-deoxyribonucleoside 5'-triphosphate = DNA(n+1) + diphosphate. Its function is as follows. In addition to polymerase activity, this DNA polymerase potentially exhibits 3' to 5' exonuclease activity. This chain is DNA polymerase (DPO), found in Chlorella (PBCV-NY2A).